The following is a 257-amino-acid chain: MEHDDRRASQVRAGNNRVVIRVEQIENNAVHEQEGSTTIASQPVTATHAAPVSMAHLEQFTDSDWVEPSDEPTGTAVFDATGDQAAMPSWDELVRQHADRVYRLAYRLSGNQHDAEDLTQETFIRVFRSVQNYQPGTFEGWLHRITTNLFLDMVRRRGRIRMEALPEDYDRVPAEDPNPEQIYHDSRLGADLQAALDSLPPEFRAAVVLCDIEGLSYEEIGATLGVKLGTVRSRIHRGRQQLRDYLAKHSSETAQSA.

The tract at residues 87 to 153 is sigma-70 factor domain-2; sequence MPSWDELVRQ…RITTNLFLDM (67 aa). The short motif at 111 to 114 is the Polymerase core binding element; that stretch reads NQHD. Residues 186–236 form a sigma-70 factor domain-4 region; that stretch reads SRLGADLQAALDSLPPEFRAAVVLCDIEGLSYEEIGATLGVKLGTVRSRIH. The segment at residues 211–230 is a DNA-binding region (H-T-H motif); sequence DIEGLSYEEIGATLGVKLGT.

The protein belongs to the sigma-70 factor family. ECF subfamily. Interacts transiently with the RNA polymerase catalytic core formed by RpoA, RpoB, RpoC and RpoZ (2 alpha, 1 beta, 1 beta' and 1 omega subunit) to form the RNA polymerase holoenzyme that can initiate transcription. Interacts (via sigma-70 factor domain 4) with RseA; interaction is abrogated by treatment of cells with H(2)O(2) or detergent.

Its function is as follows. Sigma factors are initiation factors that promote the attachment of RNA polymerase to specific initiation sites and are then released. Extracytoplasmic function (ECF) sigma factors are held in an inactive form by an anti-sigma factor until released. In Mycolicibacterium smegmatis (strain ATCC 700084 / mc(2)155) (Mycobacterium smegmatis), this protein is ECF RNA polymerase sigma factor SigE (sigE).